A 173-amino-acid polypeptide reads, in one-letter code: Small ribosomal subunit protein uS5 (173 aa).

The 64-residue stretch at 17–80 (WQERVIQIRR…SDAKKHVVDV (64 aa)) folds into the S5 DRBM domain.

This sequence belongs to the universal ribosomal protein uS5 family. Part of the 30S ribosomal subunit. Contacts proteins S4 and S8.

Functionally, with S4 and S12 plays an important role in translational accuracy. In terms of biological role, located at the back of the 30S subunit body where it stabilizes the conformation of the head with respect to the body. This is Small ribosomal subunit protein uS5 from Picosynechococcus sp. (strain ATCC 27264 / PCC 7002 / PR-6) (Agmenellum quadruplicatum).